Consider the following 114-residue polypeptide: Large ribosomal subunit protein bL19 (114 aa).

It belongs to the bacterial ribosomal protein bL19 family.

Functionally, this protein is located at the 30S-50S ribosomal subunit interface and may play a role in the structure and function of the aminoacyl-tRNA binding site. The protein is Large ribosomal subunit protein bL19 of Bacillus cereus (strain AH187).